The primary structure comprises 433 residues: Ribosomal protein uS12 methylthiotransferase RimO (433 aa).

The MTTase N-terminal domain maps to 9–124 (NKINVITLGC…LLKALGADYR (116 aa)). Cys-18, Cys-53, Cys-87, Cys-148, Cys-152, and Cys-155 together coordinate [4Fe-4S] cluster. The Radical SAM core domain occupies 134–364 (TTPKNYAYLK…MDLQSQISWD (231 aa)). Residues 367 to 433 (QEKLGQTFRC…TEFDLYGEPA (67 aa)) enclose the TRAM domain.

It belongs to the methylthiotransferase family. RimO subfamily. Requires [4Fe-4S] cluster as cofactor.

The protein localises to the cytoplasm. The enzyme catalyses L-aspartate(89)-[ribosomal protein uS12]-hydrogen + (sulfur carrier)-SH + AH2 + 2 S-adenosyl-L-methionine = 3-methylsulfanyl-L-aspartate(89)-[ribosomal protein uS12]-hydrogen + (sulfur carrier)-H + 5'-deoxyadenosine + L-methionine + A + S-adenosyl-L-homocysteine + 2 H(+). In terms of biological role, catalyzes the methylthiolation of an aspartic acid residue of ribosomal protein uS12. The sequence is that of Ribosomal protein uS12 methylthiotransferase RimO from Flavobacterium psychrophilum (strain ATCC 49511 / DSM 21280 / CIP 103535 / JIP02/86).